The primary structure comprises 193 residues: Translocation protein SEC72 (193 aa).

In terms of assembly, component of the heterotetrameric Sec62/63complex composed of SEC62, SEC63, SEC71 and SEC72. The Sec62/63 complex associates with the Sec61 complex to form the Sec complex. May interact with protein YLR301W. Part of a complex consisting of KAR2, SEC63, SEC66 and SEC72.

Its subcellular location is the cytoplasm. In terms of biological role, acts as a non-essential component of the Sec62/63 complex which is involved in SRP-independent post-translational translocation across the endoplasmic reticulum (ER) and functions together with the Sec61 complex and KAR2 in a channel-forming translocon complex. A cycle of assembly and disassembly of Sec62/63 complex from SEC61 may govern the activity of the translocon. SEC72 may be involved in signal peptide recognition for a defined subset of leader peptides, or may increase the efficiency of unusual or 'difficult' secretory precursors to the translocation pore, it may be that this protein binds charged leader peptides to the membrane until they engage the translocation apparatus. This Saccharomyces cerevisiae (strain ATCC 204508 / S288c) (Baker's yeast) protein is Translocation protein SEC72 (SEC72).